The primary structure comprises 714 residues: Structure-specific endonuclease subunit SLX4 2 (714 aa).

Composition is skewed to basic and acidic residues over residues 1–14 (MSPE…EDNL) and 24–34 (IHEETLAEESH). Disordered regions lie at residues 1–114 (MSPE…EQQG) and 338–369 (SSGP…KTPQ). Over residues 36-46 (QAIQRSISRLS) the composition is skewed to polar residues. Basic residues predominate over residues 79–92 (KTKKRKLKVSKPRK).

The protein belongs to the SLX4 family. As to quaternary structure, forms a heterodimer with SLX1. In terms of processing, phosphorylated in response to DNA damage.

The protein localises to the nucleus. In terms of biological role, regulatory subunit of the SLX1-SLX4 structure-specific endonuclease that resolves DNA secondary structures generated during DNA repair and recombination. Has endonuclease activity towards branched DNA substrates, introducing single-strand cuts in duplex DNA close to junctions with ss-DNA. This chain is Structure-specific endonuclease subunit SLX4 2, found in Candida tropicalis (strain ATCC MYA-3404 / T1) (Yeast).